Consider the following 320-residue polypeptide: Aminoacyl tRNA synthase complex-interacting multifunctional protein 2 (320 aa).

The interval threonine 82–proline 162 is interaction with PRKN. The tract at residues proline 162 to histidine 225 is interaction with TP53. The 98-residue stretch at leucine 220–lysine 317 folds into the GST C-terminal domain.

As to quaternary structure, part of the multisynthetase complex (MSC), a multisubunit complex that groups tRNA ligases for Arg (RARS1), Asp (DARS1), Gln (QARS1), Ile (IARS1), Leu (LARS1), Lys (KARS1), Met (MARS1) the bifunctional ligase for Glu and Pro (EPRS1) and the auxiliary subunits AIMP1/p43, AIMP2/p38 and EEF1E1/p18. Interacts (via N-terminus) with KARS1. Interacts with EPRS1. Forms a linear complex that contains MARS1, EEF1E1, EPRS1 and AIMP2 that is at the core of the multisubunit complex. Binds FUBP1 (via C-terminus). Interacts in both its unphosphorylated and phosphorylated forms with p53/TP53 (via N-terminus) in the nucleus following UV irradiation. Interacts (via N-terminus) with PRKN/parkin (via first RING-type domain). Interacts with TARS3. Phosphorylated on serine residues in response to UV irradiation. Post-translationally, ubiquitinated by PRKN, leading to its degradation by the proteasome. Mutant PRKN fails to ubiquitinate AIMP2 efficiently, allowing its accumulation which may contribute to neurodegeneration associated with Parkinson disease.

The protein resides in the cytoplasm. Its subcellular location is the cytosol. The protein localises to the nucleus. Functionally, required for assembly and stability of the aminoacyl-tRNA synthase complex. Mediates ubiquitination and degradation of FUBP1, a transcriptional activator of MYC, leading to MYC down-regulation which is required for aveolar type II cell differentiation. Blocks MDM2-mediated ubiquitination and degradation of p53/TP53. Functions as a proapoptotic factor. In Homo sapiens (Human), this protein is Aminoacyl tRNA synthase complex-interacting multifunctional protein 2 (AIMP2).